The chain runs to 344 residues: Pyruvate dehydrogenase E1 component subunit alpha (344 aa).

Pyruvate is bound by residues His55, Tyr81, Arg82, Ala130, Ile132, Asp168, Gly169, and Asn197. The thiamine diphosphate site is built by Tyr81, Arg82, Ala130, Ile132, Asp168, Gly169, Asn197, and His266. Residue Asp168 coordinates Mg(2+). Asn197 is a binding site for Mg(2+).

In terms of assembly, heterodimer of an alpha and a beta chain. Thiamine diphosphate serves as cofactor. Mg(2+) is required as a cofactor.

Its subcellular location is the plastid. The protein resides in the chloroplast. It catalyses the reaction N(6)-[(R)-lipoyl]-L-lysyl-[protein] + pyruvate + H(+) = N(6)-[(R)-S(8)-acetyldihydrolipoyl]-L-lysyl-[protein] + CO2. Its function is as follows. The pyruvate dehydrogenase complex catalyzes the overall conversion of pyruvate to acetyl-CoA and CO(2). It contains multiple copies of three enzymatic components: pyruvate dehydrogenase (E1), dihydrolipoamide acetyltransferase (E2) and lipoamide dehydrogenase (E3). In Porphyra purpurea (Red seaweed), this protein is Pyruvate dehydrogenase E1 component subunit alpha (pdhA).